The chain runs to 290 residues: 4-hydroxy-3-methylbut-2-enyl diphosphate reductase (290 aa).

[4Fe-4S] cluster is bound at residue Cys-13. Positions 41 and 75 each coordinate (2E)-4-hydroxy-3-methylbut-2-enyl diphosphate. Residues His-41 and His-75 each contribute to the dimethylallyl diphosphate site. Isopentenyl diphosphate-binding residues include His-41 and His-75. Cys-97 contributes to the [4Fe-4S] cluster binding site. Residue His-129 coordinates (2E)-4-hydroxy-3-methylbut-2-enyl diphosphate. His-129 lines the dimethylallyl diphosphate pocket. His-129 serves as a coordination point for isopentenyl diphosphate. The active-site Proton donor is Glu-131. (2E)-4-hydroxy-3-methylbut-2-enyl diphosphate is bound at residue Thr-167. Cys-198 is a binding site for [4Fe-4S] cluster. (2E)-4-hydroxy-3-methylbut-2-enyl diphosphate-binding residues include Ser-226, Ser-227, Asn-228, and Ser-270. Ser-226, Ser-227, Asn-228, and Ser-270 together coordinate dimethylallyl diphosphate. Ser-226, Ser-227, Asn-228, and Ser-270 together coordinate isopentenyl diphosphate.

The protein belongs to the IspH family. [4Fe-4S] cluster serves as cofactor.

The enzyme catalyses isopentenyl diphosphate + 2 oxidized [2Fe-2S]-[ferredoxin] + H2O = (2E)-4-hydroxy-3-methylbut-2-enyl diphosphate + 2 reduced [2Fe-2S]-[ferredoxin] + 2 H(+). It carries out the reaction dimethylallyl diphosphate + 2 oxidized [2Fe-2S]-[ferredoxin] + H2O = (2E)-4-hydroxy-3-methylbut-2-enyl diphosphate + 2 reduced [2Fe-2S]-[ferredoxin] + 2 H(+). Its pathway is isoprenoid biosynthesis; dimethylallyl diphosphate biosynthesis; dimethylallyl diphosphate from (2E)-4-hydroxy-3-methylbutenyl diphosphate: step 1/1. The protein operates within isoprenoid biosynthesis; isopentenyl diphosphate biosynthesis via DXP pathway; isopentenyl diphosphate from 1-deoxy-D-xylulose 5-phosphate: step 6/6. In terms of biological role, catalyzes the conversion of 1-hydroxy-2-methyl-2-(E)-butenyl 4-diphosphate (HMBPP) into a mixture of isopentenyl diphosphate (IPP) and dimethylallyl diphosphate (DMAPP). Acts in the terminal step of the DOXP/MEP pathway for isoprenoid precursor biosynthesis. This is 4-hydroxy-3-methylbut-2-enyl diphosphate reductase from Parabacteroides distasonis (strain ATCC 8503 / DSM 20701 / CIP 104284 / JCM 5825 / NCTC 11152).